The chain runs to 433 residues: ATP-sensitive inward rectifier potassium channel 12 (433 aa).

The Cytoplasmic portion of the chain corresponds to 1–77 (MTAASRANPY…LADMFTTCVD (77 aa)). Residue C75 is modified to S-nitrosocysteine. A helical transmembrane segment spans residues 78–104 (IRWRYMLLIFSLAFLASWLLFGIIFWV). Residues R79 and R81 each coordinate a 1,2-diacyl-sn-glycero-3-phospho-(1D-myo-inositol-4,5-bisphosphate). Residues 105-129 (IAVAHGDLEPAEGRGRTPCVMQVHG) are Extracellular-facing. A disulfide bridge connects residues C123 and C155. An intramembrane region (helical; Pore-forming) is located at residues 130-146 (FMAAFLFSIETQTTIGY). K(+) is bound by residues T143, I144, G145, and Y146. The Selectivity filter motif lies at 143–148 (TIGYGL). The Extracellular portion of the chain corresponds to 147 to 155 (GLRCVTEEC). The chain crosses the membrane as a helical span at residues 156-183 (PVAVFMVVAQSIVGCIIDSFMIGAIMAK). Residues K183 and K188 each contribute to the a 1,2-diacyl-sn-glycero-3-phospho-(1D-myo-inositol-4,5-bisphosphate) site. Residues 184–433 (MARPKKRAQT…QRPYRRESEI (250 aa)) lie on the Cytoplasmic side of the membrane. A disordered region spans residues 387-433 (DEEDEADGDQDGRSRDGLSPQARHDFDRLQAGGGVLEQRPYRRESEI). Residues 396–414 (QDGRSRDGLSPQARHDFDR) show a composition bias toward basic and acidic residues. The PDZ-binding motif lies at 431–433 (SEI).

This sequence belongs to the inward rectifier-type potassium channel (TC 1.A.2.1) family. KCNJ12 subfamily. In terms of assembly, homotetramer. Forms heteromer with KCNJ4. Can form heteromeric channels with Kir2.6/KCNJ18. Association, via its PDZ-recognition domain, with LIN7A, LIN7B, LIN7C, DLG1, CASK and APBA1 plays a key role in its localization and trafficking.

The protein localises to the membrane. Its subcellular location is the cell membrane. It is found in the sarcolemma. It localises to the T-tubule. It catalyses the reaction K(+)(in) = K(+)(out). Its activity is regulated as follows. Activated by phosphatidylinositol 4,5-biphosphate (PtdIns(4,5)P2). PtdIns(4,5)P2 binding to the cytoplasmic side of the channel triggers a conformation change leading to channel opening. Inhibited by Ba(2+). Its function is as follows. Inward rectifying potassium channel that probably participates in controlling the resting membrane potential in electrically excitable cells. Probably participates in establishing action potential waveform and excitability of neuronal and muscle tissues. Inward rectifier potassium channels are characterized by a greater tendency to allow potassium to flow into the cell rather than out of it. Their voltage dependence is regulated by the concentration of extracellular potassium; as external potassium is raised, the voltage range of the channel opening shifts to more positive voltages. The inward rectification is mainly due to the blockage of outward current by internal magnesium. In Homo sapiens (Human), this protein is ATP-sensitive inward rectifier potassium channel 12 (KCNJ12).